The primary structure comprises 147 residues: Prefoldin subunit alpha (147 aa).

It belongs to the prefoldin alpha subunit family. As to quaternary structure, heterohexamer of two alpha and four beta subunits.

Its subcellular location is the cytoplasm. In terms of biological role, molecular chaperone capable of stabilizing a range of proteins. Seems to fulfill an ATP-independent, HSP70-like function in archaeal de novo protein folding. This Saccharolobus islandicus (strain Y.N.15.51 / Yellowstone #2) (Sulfolobus islandicus) protein is Prefoldin subunit alpha.